Here is a 755-residue protein sequence, read N- to C-terminus: Zinc transporter ZIP6 (755 aa).

An N-terminal signal peptide occupies residues 1 to 28 (MARKLSVILILTFALSVTNPLHELKAAA). At 29-325 (FPQTTEKISP…PKTYSLQIAW (297 aa)) the chain is on the extracellular side. N-linked (GlcNAc...) asparagine glycosylation is present at asparagine 67. Positions 95–128 (DHDHHSDHEHHSDHERHSDHEHHSEHEHHSDHDH) are enriched in basic and acidic residues. 2 disordered regions span residues 95-186 (DHDH…SASE) and 202-246 (LETI…SVSE). Basic residues predominate over residues 129 to 144 (HSHHNHAASGKNKRKA). Composition is skewed to basic and acidic residues over residues 145–159 (LCPD…KDPR) and 167–179 (HRPE…RNVK). Residues 219-234 (SSSTPPSVTSKSRVSR) are compositionally biased toward low complexity. N-linked (GlcNAc...) asparagine glycans are attached at residues asparagine 241, asparagine 266, and asparagine 283. Residues 326-346 (VGGFIAISIISFLSLLGVILV) traverse the membrane as a helical segment. At 347 to 355 (PLMNRVFFK) the chain is on the cytoplasmic side. A helical membrane pass occupies residues 356–376 (FLLSFLVALAVGTLSGDAFLH). Over 377 to 423 (LLPHSHASHHHSHSHEEPAMEMKRGPLFSHLSSQNIEESAYFDSTWK) the chain is Extracellular. The chain crosses the membrane as a helical span at residues 424–444 (GLTALGGLYFMFLVEHVLTLI). Residues 445–657 (KQFKDKKKKN…LKAGMTVKQA (213 aa)) are Cytoplasmic-facing. Residues 464-480 (VEIKKQLSKYESQLSTN) are a coiled coil. Phosphoserine is present on residues serine 471 and serine 478. The helical transmembrane segment at 658–678 (VLYNALSAMLAYLGMATGIFI) threads the bilayer. Over 679-686 (GHYAENVS) the chain is Extracellular. N-linked (GlcNAc...) asparagine glycosylation is present at asparagine 684. A helical transmembrane segment spans residues 687–707 (MWIFALTAGLFMYVALVDMVP). The Cytoplasmic segment spans residues 708–724 (EMLHNDASDHGCSRWGY). The chain crosses the membrane as a helical span at residues 725-745 (FFLQNAGMLLGFGIMLLISIF). The Extracellular segment spans residues 746–755 (EHKIVFRINF).

This sequence belongs to the ZIP transporter (TC 2.A.5) family. In terms of assembly, interacts with SLC39A10; which triggers cells to undergo EMT and mitosis. Found in a complex with SLC39A6, SLC39A10 and with the 'Ser-727' phosphorylated form of STAT3 throughout mitosis. Found in a complex with SLC39A6, SLC39A10 and with NCAM1; this complex controls NCAM1 phosphorylation and integration into focal adhesion complexes during epithelial-to-mesenchymal transition (EMT). Found in a complex with SLC39A6, SLC39A10 and with GSK3B that controls NCAM1 phosphorylation. Post-translationally, cleaved on the N-terminus before locating to the plasma membrane. In terms of processing, N-glycosylated. Phosphorylated by ZAP70 in response to TCR stimulation leading to its activation. Highly expressed in the breast, prostate, placenta, kidney, pituitary and corpus callosum. Weakly expressed in heart and intestine. Also highly expressed in cells derived from an adenocarcinoma of the cervix and lung carcinoma.

It localises to the cell membrane. The protein localises to the cell projection. Its subcellular location is the lamellipodium membrane. It is found in the membrane raft. The protein resides in the apical cell membrane. The catalysed reaction is Zn(2+)(in) = Zn(2+)(out). In terms of biological role, zinc-influx transporter which plays a role in zinc homeostasis and in the induction of epithelial-to-mesenchymal transition (EMT). When associated with SLC39A10, the heterodimer formed by SLC39A10 and SLC39A6 mediates cellular zinc uptake to trigger cells to undergo epithelial- to-mesenchymal transition (EMT). The SLC39A10-SLC39A6 heterodimer also controls NCAM1 phosphorylation and its integration into focal adhesion complexes during EMT. Zinc influx inactivates GSK3B, enabling unphosphorylated SNAI1 in the nucleus to down-regulate adherence genes such as CDH1, causing loss of cell adherence. In addition, the SLC39A10-SLC39A6 heterodimer plays an essentiel role in initiating mitosis by importing zinc into cells to initiate a pathway resulting in the onset of mitosis. Participates in the T-cell receptor signaling regulation by mediating cellular zinc uptake into activated lymphocytes. Regulates the zinc influx necessary for proper meiotic progression to metaphase II (MII) that allows the oocyte-to-egg transition. The chain is Zinc transporter ZIP6 from Homo sapiens (Human).